Here is a 405-residue protein sequence, read N- to C-terminus: Argininosuccinate synthase (405 aa).

Residues 10–18 (AYSGGLDTS) and Ala-37 each bind ATP. Positions 88 and 93 each coordinate L-citrulline. Gly-118 lines the ATP pocket. L-aspartate is bound by residues Thr-120, Asn-124, and Asp-125. Residue Asn-124 coordinates L-citrulline. Arg-128, Ser-179, Ser-188, Glu-264, and Tyr-276 together coordinate L-citrulline.

Belongs to the argininosuccinate synthase family. Type 1 subfamily. In terms of assembly, homotetramer.

The protein localises to the cytoplasm. It carries out the reaction L-citrulline + L-aspartate + ATP = 2-(N(omega)-L-arginino)succinate + AMP + diphosphate + H(+). The protein operates within amino-acid biosynthesis; L-arginine biosynthesis; L-arginine from L-ornithine and carbamoyl phosphate: step 2/3. This chain is Argininosuccinate synthase, found in Pseudomonas fluorescens (strain ATCC BAA-477 / NRRL B-23932 / Pf-5).